A 159-amino-acid polypeptide reads, in one-letter code: Transcriptional repressor NrdR (159 aa).

Over residues 1 to 11 the composition is skewed to polar residues; the sequence is MQCPTCQNTDS. A disordered region spans residues 1–21; that stretch reads MQCPTCQNTDSRVLESRSADS. Residues 3 to 34 fold into a zinc finger; sequence CPTCQNTDSRVLESRSADSGKSVRRRRECLNC. An ATP-cone domain is found at 49–139; it reads VSVMKKDGSR…VYRKFNGVKD (91 aa).

The protein belongs to the NrdR family. The cofactor is Zn(2+).

Negatively regulates transcription of bacterial ribonucleotide reductase nrd genes and operons by binding to NrdR-boxes. The protein is Transcriptional repressor NrdR of Prochlorococcus marinus (strain MIT 9215).